The primary structure comprises 324 residues: DNA repair and recombination protein RadA (324 aa).

114-121 (GEFGSGKT) serves as a coordination point for ATP.

Belongs to the eukaryotic RecA-like protein family.

In terms of biological role, involved in DNA repair and in homologous recombination. Binds and assemble on single-stranded DNA to form a nucleoprotein filament. Hydrolyzes ATP in a ssDNA-dependent manner and promotes DNA strand exchange between homologous DNA molecules. The protein is DNA repair and recombination protein RadA of Metallosphaera sedula (strain ATCC 51363 / DSM 5348 / JCM 9185 / NBRC 15509 / TH2).